Here is a 150-residue protein sequence, read N- to C-terminus: Arginine repressor (150 aa).

It belongs to the ArgR family.

It localises to the cytoplasm. It participates in amino-acid biosynthesis; L-arginine biosynthesis [regulation]. In terms of biological role, regulates arginine biosynthesis genes. The polypeptide is Arginine repressor (Staphylococcus saprophyticus subsp. saprophyticus (strain ATCC 15305 / DSM 20229 / NCIMB 8711 / NCTC 7292 / S-41)).